A 405-amino-acid polypeptide reads, in one-letter code: L-rhamnonate dehydratase (405 aa).

The substrate site is built by H33 and R59. Positions 226, 252, and 280 each coordinate Mg(2+). Catalysis depends on H329, which acts as the Proton acceptor. E349 lines the substrate pocket.

Belongs to the mandelate racemase/muconate lactonizing enzyme family. RhamD subfamily. As to quaternary structure, homooctamer; tetramer of dimers. It depends on Mg(2+) as a cofactor.

It carries out the reaction L-rhamnonate = 2-dehydro-3-deoxy-L-rhamnonate + H2O. Functionally, catalyzes the dehydration of L-rhamnonate to 2-keto-3-deoxy-L-rhamnonate (KDR). Can also dehydrate L-lyxonate and L-mannonate, although less efficiently, but not 2-keto-4-hydroxyheptane-1,7-dioate. In Salmonella typhimurium (strain LT2 / SGSC1412 / ATCC 700720), this protein is L-rhamnonate dehydratase (rhmD).